Consider the following 298-residue polypeptide: Cholesterol 25-hydroxylase (298 aa).

The N-linked (GlcNAc...) asparagine glycan is linked to Asn5. Transmembrane regions (helical) follow at residues 38 to 58 (FFPVIFSIFTYLGFCLPFVVL), 84 to 104 (LLPCLGLTLYQHLVFVFPVTL), and 124 to 144 (LLSHVLICLLLFDTEIFAWHL). Residues 128–263 (VLICLLLFDT…FTHWDKMLGT (136 aa)) enclose the Fatty acid hydroxylase domain. A Histidine box-1 motif is present at residues 142–146 (WHLLH). The Histidine box-2 signature appears at 157–161 (HKVHH). N-linked (GlcNAc...) asparagine glycosylation occurs at Asn163. A run of 2 helical transmembrane segments spans residues 167–187 (FALATQYMSVWELLSLTFFDV) and 190–210 (VAMLQCHPLTILVFHVVNIWL). The Histidine box-3 signature appears at 238–244 (HHDLHHS).

This sequence belongs to the sterol desaturase family. It depends on Fe cation as a cofactor. N-glycosylated. As to expression, expressed in testicular macrophages at all stages, with the highest level in 10 day old animals.

The protein resides in the endoplasmic reticulum membrane. The catalysed reaction is cholesterol + AH2 + O2 = 25-hydroxycholesterol + A + H2O. It carries out the reaction cholesterol + NADPH + O2 + H(+) = 25-hydroxycholesterol + NADP(+) + H2O. Its function is as follows. Catalyzes the formation of 25-hydroxycholesterol from cholesterol, leading to repress cholesterol biosynthetic enzymes. Plays a key role in cell positioning and movement in lymphoid tissues: 25-hydroxycholesterol is an intermediate in biosynthesis of 7-alpha,25-dihydroxycholesterol (7-alpha,25-OHC), an oxysterol that acts as a ligand for the G protein-coupled receptor GPR183/EBI2, a chemotactic receptor for a number of lymphoid cells. May play an important role in regulating lipid metabolism by synthesizing a corepressor that blocks sterol regulatory element binding protein (SREBP) processing. In testis, production of 25-hydroxycholesterol by macrophages plays a role in Leydig cell differentiation. Required to restrain inflammation in macrophages: production of 25-hydroxycholesterol protects macrophages from cholesterol overload, thereby preventing mitochondrial DNA release and subsequent activation of the AIM2 inflammasome. Interferon-stimulated gene which has broad antiviral activities against a wide range of enveloped viruses. Catalyzes the formation of 25-hydroxycholesterol from cholesterol, leading to repress cholesterol biosynthetic enzymes. Plays a key role in cell positioning and movement in lymphoid tissues: 25-hydroxycholesterol is an intermediate in biosynthesis of 7-alpha,25-dihydroxycholesterol (7-alpha,25-OHC), an oxysterol that acts as a ligand for the G protein-coupled receptor GPR183/EBI2, a chemotactic receptor for a number of lymphoid cells. May play an important role in regulating lipid metabolism by synthesizing a corepressor that blocks sterol regulatory element binding protein (SREBP) processing. As an interferon-stimulated gene, has broad antiviral activities against a wide range of enveloped viruses. Its product, 25-hydroxycholesterol, activates the ER-localized enzyme ACAT to induce internalization of accessible cholesterol on the plasma membrane and restricts virus-host membranes fusion which inhibits virus replication. In testis, production of 25-hydroxycholesterol by macrophages plays a role in Leydig cell differentiation. The sequence is that of Cholesterol 25-hydroxylase from Rattus norvegicus (Rat).